A 148-amino-acid chain; its full sequence is MVVESNCEIPENLYYFIEGKNTVWAKLESPDTIVVGITDLAQTMAGKIVKVRIKKKGTKVEKGRPVATMESGKWAGPVPAPVTGEVVEVNAEAEKSPIIINQDPYGKGWLVKMKMSNPEELKQLFSGQAAIQKLKELIASEKLTCKRL.

The 83-residue stretch at 32-114 folds into the Lipoyl-binding domain; the sequence is TIVVGITDLA…YGKGWLVKMK (83 aa). Position 73 is an N6-lipoyllysine (Lys-73).

Belongs to the GcvH family. The glycine cleavage system is composed of four proteins: P, T, L and H. Requires (R)-lipoate as cofactor.

In terms of biological role, the glycine cleavage system catalyzes the degradation of glycine. The H protein shuttles the methylamine group of glycine from the P protein to the T protein. This is Probable glycine cleavage system H protein 2 from Saccharolobus solfataricus (strain ATCC 35092 / DSM 1617 / JCM 11322 / P2) (Sulfolobus solfataricus).